A 298-amino-acid chain; its full sequence is tRNA (guanine(9)-N1)-methyltransferase (298 aa).

Over residues 1–10 (MSDTSENSNA) the composition is skewed to polar residues. The disordered stretch occupies residues 1–44 (MSDTSENSNAEIPADTSDVKDKPKPIVRAPQFPPPPEGISKSQW). The SAM-dependent MTase TRM10-type domain occupies 96–285 (PPKVNLNQSD…SVLPPRKLEV (190 aa)). S-adenosyl-L-methionine-binding positions include 192 to 193 (LT), Gly212, 216 to 220 (DKNRH), Cys224, Leu238, and 250 to 252 (KVL). The Proton acceptor role is filled by Asp216.

The protein belongs to the class IV-like SAM-binding methyltransferase superfamily. TRM10 family. Monomer.

The protein resides in the cytoplasm. It is found in the nucleus. It carries out the reaction guanosine(9) in tRNA + S-adenosyl-L-methionine = N(1)-methylguanosine(9) in tRNA + S-adenosyl-L-homocysteine + H(+). In terms of biological role, S-adenosyl-L-methionine-dependent guanine N(1)-methyltransferase that catalyzes the formation of N(1)-methylguanine at position 9 (m1G9) in cytoplasmic tRNA. This is tRNA (guanine(9)-N1)-methyltransferase from Kluyveromyces lactis (strain ATCC 8585 / CBS 2359 / DSM 70799 / NBRC 1267 / NRRL Y-1140 / WM37) (Yeast).